The primary structure comprises 126 residues: Histone H2B type 1-K (126 aa).

Over residues Met-1–Lys-12 the composition is skewed to low complexity. The disordered stretch occupies residues Met-1 to Glu-36. Pro-2 carries the N-acetylproline modification. Position 3 is an ADP-ribosyl glutamic acid (Glu-3). Residue Lys-6 is modified to N6-(2-hydroxyisobutyryl)lysine; alternate. Lys-6 is subject to N6-(beta-hydroxybutyryl)lysine; alternate. The residue at position 6 (Lys-6) is an N6-acetyllysine; alternate. N6-butyryllysine; alternate is present on Lys-6. The residue at position 6 (Lys-6) is an N6-crotonyllysine; alternate. Lys-6 bears the N6-lactoyllysine; alternate mark. Lys-6 is covalently cross-linked (Glycyl lysine isopeptide (Lys-Gly) (interchain with G-Cter in SUMO2); alternate). An ADP-ribosylserine modification is found at Ser-7. Position 12 is an N6-(beta-hydroxybutyryl)lysine; alternate (Lys-12). Lys-12 and Lys-13 each carry N6-acetyllysine; alternate. Lys-12 and Lys-13 each carry N6-crotonyllysine; alternate. Lys-12 carries the N6-lactoyllysine; alternate modification. Lys-13 carries the N6-(2-hydroxyisobutyryl)lysine; alternate modification. At Ser-15 the chain carries Phosphoserine; by STK4/MST1. An N6-acetyllysine; alternate mark is found at Lys-16, Lys-17, Lys-21, and Lys-24. 4 positions are modified to N6-crotonyllysine; alternate: Lys-16, Lys-17, Lys-21, and Lys-24. 4 positions are modified to N6-lactoyllysine; alternate: Lys-16, Lys-17, Lys-21, and Lys-24. Residue Lys-17 is modified to N6-glutaryllysine; alternate. 2 positions are modified to N6-(2-hydroxyisobutyryl)lysine; alternate: Lys-21 and Lys-24. At Lys-21 the chain carries N6-(beta-hydroxybutyryl)lysine; alternate. Residue Lys-21 is modified to N6-butyryllysine; alternate. A Glycyl lysine isopeptide (Lys-Gly) (interchain with G-Cter in SUMO2); alternate cross-link involves residue Lys-21. Residue Lys-25 is modified to N6-(2-hydroxyisobutyryl)lysine. Lys-35 carries the post-translational modification N6-(2-hydroxyisobutyryl)lysine; alternate. Lys-35 is modified (N6-(beta-hydroxybutyryl)lysine; alternate). Lys-35 carries the post-translational modification N6-crotonyllysine; alternate. The residue at position 35 (Lys-35) is an N6-glutaryllysine; alternate. Lys-35 is modified (N6-succinyllysine; alternate). Lys-35 is covalently cross-linked (Glycyl lysine isopeptide (Lys-Gly) (interchain with G-Cter in ubiquitin); alternate). Position 36 is a polyADP-ribosyl glutamic acid (Glu-36). Ser-37 is modified (phosphoserine; by AMPK). 3 positions are modified to N6-(2-hydroxyisobutyryl)lysine; alternate: Lys-44, Lys-47, and Lys-58. An N6-lactoyllysine; alternate modification is found at Lys-44. N6-glutaryllysine; alternate is present on residues Lys-44 and Lys-47. Position 47 is an N6-methyllysine; alternate (Lys-47). Lys-58 bears the N6,N6-dimethyllysine; alternate mark. Arg-80 carries the post-translational modification Dimethylated arginine. At Lys-86 the chain carries N6-(2-hydroxyisobutyryl)lysine; alternate. Residue Lys-86 is modified to N6-acetyllysine; alternate. At Lys-86 the chain carries N6-lactoyllysine; alternate. Lys-86 is modified (N6,N6,N6-trimethyllysine; alternate). An omega-N-methylarginine mark is found at Arg-87 and Arg-93. Position 109 is an N6-(2-hydroxyisobutyryl)lysine; alternate (Lys-109). Lys-109 carries the N6-(beta-hydroxybutyryl)lysine; alternate modification. At Lys-109 the chain carries N6-lactoyllysine; alternate. Position 109 is an N6-glutaryllysine; alternate (Lys-109). Lys-109 is subject to N6-methyllysine; alternate. A glycan (O-linked (GlcNAc) serine) is linked at Ser-113. At Thr-116 the chain carries Phosphothreonine. An N6-(2-hydroxyisobutyryl)lysine; alternate mark is found at Lys-117 and Lys-121. At Lys-117 the chain carries N6-(beta-hydroxybutyryl)lysine; alternate. Lys-117 and Lys-121 each carry N6-lactoyllysine; alternate. Residues Lys-117 and Lys-121 each carry the N6-glutaryllysine; alternate modification. An N6-succinyllysine; alternate mark is found at Lys-117 and Lys-121. Lys-117 is modified (N6-methylated lysine; alternate). A Glycyl lysine isopeptide (Lys-Gly) (interchain with G-Cter in ubiquitin); alternate cross-link involves residue Lys-121.

Belongs to the histone H2B family. The nucleosome is a histone octamer containing two molecules each of H2A, H2B, H3 and H4 assembled in one H3-H4 heterotetramer and two H2A-H2B heterodimers. The octamer wraps approximately 147 bp of DNA. Monoubiquitination at Lys-35 (H2BK34Ub) by the MSL1/MSL2 dimer is required for histone H3 'Lys-4' (H3K4me) and 'Lys-79' (H3K79me) methylation and transcription activation at specific gene loci, such as HOXA9 and MEIS1 loci. Similarly, monoubiquitination at Lys-121 (H2BK120Ub) by the RNF20/40 complex gives a specific tag for epigenetic transcriptional activation and is also prerequisite for histone H3 'Lys-4' and 'Lys-79' methylation. It also functions cooperatively with the FACT dimer to stimulate elongation by RNA polymerase II. H2BK120Ub also acts as a regulator of mRNA splicing: deubiquitination by USP49 is required for efficient cotranscriptional splicing of a large set of exons. Post-translationally, phosphorylated on Ser-15 (H2BS14ph) by STK4/MST1 during apoptosis; which facilitates apoptotic chromatin condensation. Also phosphorylated on Ser-15 in response to DNA double strand breaks (DSBs), and in correlation with somatic hypermutation and immunoglobulin class-switch recombination. Phosphorylation at Ser-37 (H2BS36ph) by AMPK in response to stress promotes transcription. In terms of processing, glcNAcylation at Ser-113 promotes monoubiquitination of Lys-121. It fluctuates in response to extracellular glucose, and associates with transcribed genes. ADP-ribosylated by PARP1 or PARP2 on Ser-7 (H2BS6ADPr) in response to DNA damage. H2BS6ADPr promotes recruitment of CHD1L. Mono-ADP-ribosylated on Glu-3 (H2BE2ADPr) by PARP3 in response to single-strand breaks. Poly ADP-ribosylation on Glu-36 (H2BE35ADPr) by PARP1 regulates adipogenesis: it inhibits phosphorylation at Ser-37 (H2BS36ph), thereby blocking expression of pro-adipogenetic genes. Post-translationally, crotonylation (Kcr) is specifically present in male germ cells and marks testis-specific genes in post-meiotic cells, including X-linked genes that escape sex chromosome inactivation in haploid cells. Crotonylation marks active promoters and enhancers and confers resistance to transcriptional repressors. It is also associated with post-meiotically activated genes on autosomes. In terms of processing, hydroxybutyrylation of histones is induced by starvation. Lactylated in macrophages by EP300/P300 by using lactoyl-CoA directly derived from endogenous or exogenous lactate, leading to stimulates gene transcription.

It localises to the nucleus. The protein localises to the chromosome. Functionally, core component of nucleosome. Nucleosomes wrap and compact DNA into chromatin, limiting DNA accessibility to the cellular machineries which require DNA as a template. Histones thereby play a central role in transcription regulation, DNA repair, DNA replication and chromosomal stability. DNA accessibility is regulated via a complex set of post-translational modifications of histones, also called histone code, and nucleosome remodeling. The sequence is that of Histone H2B type 1-K from Mus musculus (Mouse).